The following is a 336-amino-acid chain: Small ribosomal subunit protein uS2 (336 aa).

Belongs to the universal ribosomal protein uS2 family.

The polypeptide is Small ribosomal subunit protein uS2 (Beijerinckia indica subsp. indica (strain ATCC 9039 / DSM 1715 / NCIMB 8712)).